We begin with the raw amino-acid sequence, 130 residues long: Small ribosomal subunit protein uS4 (130 aa).

At Lys64 the chain carries N6-acetyllysine. A Glycyl lysine isopeptide (Lys-Gly) (interchain with G-Cter in SUMO2) cross-link involves residue Lys91. An S4 RNA-binding domain is found at 106 to 130 (RRLQTQVFKLGLAXSIHHXRVLIRQ). Lys114 is modified (N6-acetyllysine).

The protein belongs to the universal ribosomal protein uS4 family. In terms of assembly, component of the small ribosomal subunit. Identified in a IGF2BP1-dependent mRNP granule complex containing untranslated mRNAs. Part of the small subunit (SSU) processome, composed of more than 70 proteins and the RNA chaperone small nucleolar RNA (snoRNA) U3.

The protein localises to the cytoplasm. It is found in the nucleus. The protein resides in the nucleolus. Its function is as follows. Component of the small ribosomal subunit. The ribosome is a large ribonucleoprotein complex responsible for the synthesis of proteins in the cell. Part of the small subunit (SSU) processome, first precursor of the small eukaryotic ribosomal subunit. During the assembly of the SSU processome in the nucleolus, many ribosome biogenesis factors, an RNA chaperone and ribosomal proteins associate with the nascent pre-rRNA and work in concert to generate RNA folding, modifications, rearrangements and cleavage as well as targeted degradation of pre-ribosomal RNA by the RNA exosome. The polypeptide is Small ribosomal subunit protein uS4 (RPS9) (Sus scrofa (Pig)).